Reading from the N-terminus, the 528-residue chain is Homoserine O-acetyltransferase (528 aa).

The AB hydrolase-1 domain occupies 60 to 245 (LVICHALTGS…AALLTYRSRD (186 aa)). Residue serine 154 is the Nucleophile of the active site. 2 disordered regions span residues 250-335 (RFGR…VKTQ) and 388-413 (DLSA…DATE). The segment covering 273-282 (QETTDPSVPS) has biased composition (polar residues). Basic and acidic residues predominate over residues 295-304 (AWREHNDGHR). Over residues 389-409 (LSAPSRDTSLSSLSSGLPSSP) the composition is skewed to low complexity. Residues aspartate 438 and histidine 467 contribute to the active site.

Belongs to the AB hydrolase superfamily. MetX family.

It is found in the cytoplasm. It carries out the reaction L-homoserine + acetyl-CoA = O-acetyl-L-homoserine + CoA. The protein operates within amino-acid biosynthesis; L-methionine biosynthesis via de novo pathway; O-acetyl-L-homoserine from L-homoserine: step 1/1. Inhibited by 6-carbamoyl-3a,4,5,9b-tetrahydro-3H-cyclopenta[ c]quinoline-4-carboxylic acid (CTCQC). Functionally, commits homoserine to the methionine biosynthesis pathway by catalyzing its O-acetylation. This is Homoserine O-acetyltransferase from Cryptococcus neoformans var. grubii serotype A (strain H99 / ATCC 208821 / CBS 10515 / FGSC 9487) (Filobasidiella neoformans var. grubii).